Reading from the N-terminus, the 118-residue chain is Small ribosomal subunit protein uS13 (118 aa).

Residues 93–118 are disordered; it reads RGLPVRGQRTKTNARTRKGPRKPIRK.

It belongs to the universal ribosomal protein uS13 family. In terms of assembly, part of the 30S ribosomal subunit. Forms a loose heterodimer with protein S19. Forms two bridges to the 50S subunit in the 70S ribosome.

Functionally, located at the top of the head of the 30S subunit, it contacts several helices of the 16S rRNA. In the 70S ribosome it contacts the 23S rRNA (bridge B1a) and protein L5 of the 50S subunit (bridge B1b), connecting the 2 subunits; these bridges are implicated in subunit movement. Contacts the tRNAs in the A and P-sites. This is Small ribosomal subunit protein uS13 from Azotobacter vinelandii (strain DJ / ATCC BAA-1303).